A 209-amino-acid polypeptide reads, in one-letter code: Nucleoside triphosphate pyrophosphatase (209 aa).

Catalysis depends on aspartate 74, which acts as the Proton acceptor.

It belongs to the Maf family. A divalent metal cation is required as a cofactor.

It is found in the cytoplasm. The catalysed reaction is a ribonucleoside 5'-triphosphate + H2O = a ribonucleoside 5'-phosphate + diphosphate + H(+). It catalyses the reaction a 2'-deoxyribonucleoside 5'-triphosphate + H2O = a 2'-deoxyribonucleoside 5'-phosphate + diphosphate + H(+). Nucleoside triphosphate pyrophosphatase. May have a dual role in cell division arrest and in preventing the incorporation of modified nucleotides into cellular nucleic acids. In Neorickettsia sennetsu (strain ATCC VR-367 / Miyayama) (Ehrlichia sennetsu), this protein is Nucleoside triphosphate pyrophosphatase.